A 76-amino-acid polypeptide reads, in one-letter code: UPF0352 protein ECA2748 (76 aa).

This sequence belongs to the UPF0352 family.

The chain is UPF0352 protein ECA2748 from Pectobacterium atrosepticum (strain SCRI 1043 / ATCC BAA-672) (Erwinia carotovora subsp. atroseptica).